A 506-amino-acid chain; its full sequence is MASKYGSGVLPENKKEKGDKETPETSYSSQSVSVNTLADQVSSTLSFAPSSDSKTGGEVKFNEKSDQSGKSNTCRPSTSSDISDESTCSSFSGNNKPHKANDVRWEAIQAVRTKHGVLGLNHFRLLKRLGCGDIGTVHLAELHGTRCFFAMKVMDKGALASRKKLLRAQTEREILQCLDHPFLPTLYSHFETEKFSCLVMEFCPGGDLHTLRQRQPGKRFSEQAAKFYVAEVLLAMEYLHMLGIIYRDLKPENVLVRDDGHVMLSDFDLSLRCTVSPTVVRSTVLASEGQKNSGYCAQPACIQQPSCISAPTTCFSPRYFSSKSKKDKKMKNETGNQVSPLPELVAEPTSARSMSFVGTHEYLAPEIIKGEGHGSAVDWWTFGIFLYELLFGKTPFKGSGNRATLFNVVGQPLRFPESPVVSFAARDLIRSLLVKEPQHRLAYKRGATEMKQHPFFEGVNWALVRCASPPEIPKPVDYESAPATPAAATSTSVKSDQSNYLEFDFF.

The interval 1-96 (MASKYGSGVL…TCSSFSGNNK (96 aa)) is disordered. Residues 12 to 23 (ENKKEKGDKETP) show a composition bias toward basic and acidic residues. Over residues 24–54 (ETSYSSQSVSVNTLADQVSSTLSFAPSSDSK) the composition is skewed to polar residues. The span at 55-67 (TGGEVKFNEKSDQ) shows a compositional bias: basic and acidic residues. The span at 77 to 92 (STSSDISDESTCSSFS) shows a compositional bias: low complexity. In terms of domain architecture, Protein kinase spans 123–456 (FRLLKRLGCG…ATEMKQHPFF (334 aa)). ATP-binding positions include 129–137 (LGCGDIGTV) and K152. D248 serves as the catalytic Proton acceptor. Positions 475 to 495 (PVDYESAPATPAAATSTSVKS) are disordered. Over residues 480–492 (SAPATPAAATSTS) the composition is skewed to low complexity.

This sequence belongs to the protein kinase superfamily. AGC Ser/Thr protein kinase family.

It localises to the cell membrane. It catalyses the reaction L-seryl-[protein] + ATP = O-phospho-L-seryl-[protein] + ADP + H(+). The catalysed reaction is L-threonyl-[protein] + ATP = O-phospho-L-threonyl-[protein] + ADP + H(+). In terms of biological role, protein kinase that regulates the auxin transport activity of PIN auxin efflux facilitators by direct phosphorylation. D6PK-mediated PIN phosphorylation promotes auxin transport in the hypocotyl and this is a prerequisite for PHOT1-dependent hypocotyl bending. This chain is Serine/threonine-protein kinase D6PKL1 (D6PKL1), found in Arabidopsis thaliana (Mouse-ear cress).